The chain runs to 457 residues: Phosphatidate cytidylyltransferase (457 aa).

Transmembrane regions (helical) follow at residues 71–91, 154–174, 188–208, 214–234, 255–275, and 330–350; these read VMISGFFITLASGHAWCIVLI, FIVTNHKFICYCLYLMGFVLF, GSLCVTHMVLLLVVFQAHLII, GLFWFLLPCGLVIVNDIFAYL, GFLGAWFFTALASIILTRILS, and FHALNLATFASLFAPFGGFFA.

The protein belongs to the CDS family. As to quaternary structure, homodimer. The cofactor is Mg(2+).

The protein localises to the endoplasmic reticulum membrane. It is found in the cytoplasmic vesicle. Its subcellular location is the secretory vesicle. The enzyme catalyses a 1,2-diacyl-sn-glycero-3-phosphate + CTP + H(+) = a CDP-1,2-diacyl-sn-glycerol + diphosphate. Its pathway is phospholipid metabolism; CDP-diacylglycerol biosynthesis; CDP-diacylglycerol from sn-glycerol 3-phosphate: step 3/3. In terms of biological role, supplies CDP-diacylglycerol, which may play an important role as both a precursor to phosphoinositide biosynthesis in the plasma membrane and as a negative effector of phosphatidylinositol 4-kinase activity, thereby exerting an effect on cell proliferation via a lipid-dependent signal transduction cascade. In Saccharomyces cerevisiae (strain ATCC 204508 / S288c) (Baker's yeast), this protein is Phosphatidate cytidylyltransferase (CDS1).